The chain runs to 497 residues: C4-dicarboxylate transport protein (497 aa).

The next 8 helical transmembrane spans lie at leucine 27–tyrosine 45, isoleucine 60–methionine 82, alanine 95–valine 117, isoleucine 168–valine 185, arginine 205–glycine 227, leucine 237–valine 259, isoleucine 348–isoleucine 370, and alanine 374–isoleucine 393. The segment at alanine 466–leucine 497 is disordered. A compositionally biased stretch (basic and acidic residues) spans glycine 475–proline 484.

Belongs to the dicarboxylate/amino acid:cation symporter (DAACS) (TC 2.A.23) family.

It localises to the cell inner membrane. Functionally, responsible for the transport of dicarboxylates such as succinate, fumarate, and malate from the periplasm across the inner membrane. This transport system plays an essential role in the energy supply of tropical rhizobium-legume symbionts. The sequence is that of C4-dicarboxylate transport protein (dctA1) from Sinorhizobium fredii (strain NBRC 101917 / NGR234).